We begin with the raw amino-acid sequence, 1218 residues long: Chitin synthase 4 (1218 aa).

2 disordered regions span residues 1 to 93 and 132 to 190; these read MAEP…PERN and TVSS…RRQK. Over residues 14–34 the composition is skewed to basic and acidic residues; it reads TRDKSHSPYRESPSRRLRDVE. N-linked (GlcNAc...) asparagine glycosylation occurs at asparagine 50. Polar residues-rich tracts occupy residues 71–80 and 133–142; these read SNPNPMSQSD and VSSGSTQQDT. The segment covering 175–190 has biased composition (basic and acidic residues); that stretch reads RKDTRNLTEEEKRRQK. N-linked (GlcNAc...) asparagine glycosylation is present at asparagine 180. The next 2 membrane-spanning stretches (helical) occupy residues 200 to 220 and 235 to 255; these read IWNI…LQCF and VGLI…TFGF. N-linked (GlcNAc...) asparagine glycans are attached at residues asparagine 365, asparagine 404, and asparagine 426. The helical transmembrane segment at 487-507 threads the bilayer; that stretch reads VVLYVSLVFILAIVAAKFFLA. Disordered stretches follow at residues 548 to 570 and 582 to 606; these read PKIT…RGSM and YAVD…AKLL. Over residues 553-562 the composition is skewed to polar residues; sequence PASTVTGSDG. Residues asparagine 617, asparagine 903, and asparagine 1030 are each glycosylated (N-linked (GlcNAc...) asparagine). Helical transmembrane passes span 1062–1082, 1087–1107, and 1115–1135; these read IGTL…IISI, VPVI…ILIV, and YILW…VLPA. The segment at 1188-1218 is disordered; that stretch reads QANGSVWNQQPPTRPPSGYGSMHGFEPYRDY. Polar residues predominate over residues 1189–1198; the sequence is ANGSVWNQQP. A glycan (N-linked (GlcNAc...) asparagine) is linked at asparagine 1190.

Belongs to the chitin synthase family. Class IV subfamily. Post-translationally, maximal activity requires trypsin activation, suggesting a zymogenic nature.

The protein resides in the cell membrane. The catalysed reaction is [(1-&gt;4)-N-acetyl-beta-D-glucosaminyl](n) + UDP-N-acetyl-alpha-D-glucosamine = [(1-&gt;4)-N-acetyl-beta-D-glucosaminyl](n+1) + UDP + H(+). Its activity is regulated as follows. Activity is stimulated by Mg(2+), and is more inhibited by polyoxin D than by nikkomycin. Polymerizes chitin, a structural polymer of the cell wall and septum, by transferring the sugar moiety of UDP-GlcNAc to the non-reducing end of the growing chitin polymer. CHS4 synthesizes a large amount of chitin and appears to play a role in the process of cell separation. CHS4 is particularly well suited for functioning at the higher temperatures associated with its poorly characterized saprophic environment and with human infection. The chain is Chitin synthase 4 from Exophiala dermatitidis (strain ATCC 34100 / CBS 525.76 / NIH/UT8656) (Black yeast).